The primary structure comprises 336 residues: Zinc transporter ZIP11 (336 aa).

7 helical membrane-spanning segments follow: residues 12–32 (LLGT…VFIF), 44–64 (LGFA…APAI), 75–95 (SFAF…VYLA), 188–208 (IMLL…AVGV), 258–278 (WYGQ…TIAI), 280–300 (LAEP…VYVV), and 316–336 (LASW…VGLG).

It belongs to the ZIP transporter (TC 2.A.5) family.

Its subcellular location is the cell membrane. It is found in the nucleus. It localises to the cytoplasm. The protein resides in the golgi apparatus. Functionally, functions as a cellular zinc transporter. The sequence is that of Zinc transporter ZIP11 (slc39a11) from Xenopus tropicalis (Western clawed frog).